A 550-amino-acid chain; its full sequence is Beta-cubebene synthase (550 aa).

Mg(2+)-binding residues include Asp-303, Asp-307, Asp-447, and Glu-455. The DDXXD motif motif lies at 303-307 (DDTYD).

Belongs to the terpene synthase family. Tpsa subfamily. Requires Mg(2+) as cofactor. In terms of tissue distribution, expressed in young developing leaves and in stamens. Not detected in tepals and carpels.

The enzyme catalyses (2E,6E)-farnesyl diphosphate = beta-cubebene + diphosphate. It participates in secondary metabolite biosynthesis; terpenoid biosynthesis. Sesquiterpene synthase converting farnesyl diphosphate into beta-cubebene (24.5%), alpha-muurolene (19.3%), delta-cadinol (18.6%), delta-elemene (16.0%), tau-muurolene (10.8%), and beta-elemene (10.8%). No activity with geranyl diphosphate or geranylgeranyl diphosphate. The chain is Beta-cubebene synthase from Magnolia grandiflora (Southern magnolia).